A 249-amino-acid chain; its full sequence is 5'-nucleotidase SurE (249 aa).

Asp-8, Asp-9, Ser-39, and Asn-91 together coordinate a divalent metal cation.

This sequence belongs to the SurE nucleotidase family. The cofactor is a divalent metal cation.

The protein resides in the cytoplasm. The enzyme catalyses a ribonucleoside 5'-phosphate + H2O = a ribonucleoside + phosphate. In terms of biological role, nucleotidase that shows phosphatase activity on nucleoside 5'-monophosphates. This is 5'-nucleotidase SurE from Pseudomonas putida (strain ATCC 700007 / DSM 6899 / JCM 31910 / BCRC 17059 / LMG 24140 / F1).